Consider the following 501-residue polypeptide: Probable cytosol aminopeptidase (501 aa).

The Mn(2+) site is built by Lys-257 and Asp-262. Lys-269 is a catalytic residue. The Mn(2+) site is built by Asp-281, Asp-341, and Glu-343. Arg-345 is a catalytic residue.

It belongs to the peptidase M17 family. Requires Mn(2+) as cofactor.

It is found in the cytoplasm. The enzyme catalyses Release of an N-terminal amino acid, Xaa-|-Yaa-, in which Xaa is preferably Leu, but may be other amino acids including Pro although not Arg or Lys, and Yaa may be Pro. Amino acid amides and methyl esters are also readily hydrolyzed, but rates on arylamides are exceedingly low.. It catalyses the reaction Release of an N-terminal amino acid, preferentially leucine, but not glutamic or aspartic acids.. In terms of biological role, presumably involved in the processing and regular turnover of intracellular proteins. Catalyzes the removal of unsubstituted N-terminal amino acids from various peptides. The polypeptide is Probable cytosol aminopeptidase (Synechococcus sp. (strain RCC307)).